Here is a 1386-residue protein sequence, read N- to C-terminus: MTLDDLFSMRGTAAGQTNIRNLKAMQISIASPESIREWSYGEVKKPETINYRTFKPERDGLFCAKIFGPVKDYECNCGKYKRMKHRGIVCEKCGVEVIASKVRRERMGHIELAAPVAHIWFLKTLPSKIGTLLDMTMADLEKVLYFDSYIVLDPGSTSLAKLQVISEDQYLQIIDHYGEDALVVGMGAEAIRSLLEELNLEALRAELREESQSTRSQTKKKKLTKRLKIVEAFLESDNKPEWMVMEVVPVIPPELRPLVPLDGGRFATSDLNDLYRRVINRNNRLKRLMELGAPDIIIRNEKRMLQESVDALFDNGRRGRAITGTNGRPLKSLSDMIKGKQGRFRQNLLGKRVDYSGRSVIVVGPKLKLHQCGLPKKMALELFKPFIYSKLEERGLASTIKSAKKMVEREELVVWDILEEVVREYPILLNRAPTLHRLGIQAFEPLLVEGKAIQLHPLVCAAYNADFDGDQMAVHVPLSVEAQIECRVLMMSTNNILSPANGTPVIVPSQDIVLGLYYMTVERSFEKGEGMAFCAPWEVVAAYDAGSISLHARIKVRMPDGRLLNTTPGRIMVGEVLPEGVHFDLVNTVLTKKNIARLVGNAYRDAGTKATVLLCDRLKDIGYEFATRAGVTIGVKDMTIPQSKKGILADSQAEVDNIERQYRDGIITRTEKYNKVVDVWTKATQDISQEMIKEISYDVMRDEKTGKEELNQSFNPIFMMSNSGARGNQDQMRQLAGMRGLMAKPSGEIIETPITSCFREGLSVLQYFTSTHGARKGLADTALKTANSGYLTRRLVDVVQDVIISEHDCGTVDGLEVGHLIKGGDIKMRLAERVLGRVTLYPVTDPETTEVLFPANTLIDENVAKKLDEAGINSLHIRSALTCRSDRGVCAMCYGRDLARGHVVNIGETVGIIAAQSIGEPGTQLTMRTFHIGGTASREIERSNIQAQYTGRAVLYRVKSVRNKDGQHMVMGKSGQVGIVDEQGREREKYVLPSGAKLHVEEGQEVKKGQLLAEWDPFNEPFVSEVDGLVKFTDIIEGKTVQEKADEATQMTTQTIIEYRTTNFRPAVALCDADGVVKTRPESNIPASYSLPVGAILMVRDGQEITAGDIIARKPRESSKTKDIVGGLPRVAELFEVRKPKDMAVVSQIDGIVTFAGETKGKRKLVVTPETGDEKEYLVPKGKHITVTDGDFVEAGEMLTEGHPELHDILGVKGEKYLANYLVEEIQDVYRFQGVGIDDKHIEVIVRQMLKKVTVLDPGQTSFLVGEQVDKAEFRIENQKAIEEGRTPATAEPLVLGITQASLTTSSFISAASFQETTKVLTEASLRGKNDHLRGLKENVIVGRLIPAGTGYREYVHSDISVPEQKERPDRFLEELVGAPQPVVED.

4 residues coordinate Zn(2+): cysteine 75, cysteine 77, cysteine 90, and cysteine 93. Mg(2+)-binding residues include aspartate 466, aspartate 468, and aspartate 470. Zn(2+) is bound by residues cysteine 809, cysteine 883, cysteine 890, and cysteine 893.

Belongs to the RNA polymerase beta' chain family. As to quaternary structure, the RNAP catalytic core consists of 2 alpha, 1 beta, 1 beta' and 1 omega subunit. When a sigma factor is associated with the core the holoenzyme is formed, which can initiate transcription. Mg(2+) serves as cofactor. The cofactor is Zn(2+).

The enzyme catalyses RNA(n) + a ribonucleoside 5'-triphosphate = RNA(n+1) + diphosphate. Functionally, DNA-dependent RNA polymerase catalyzes the transcription of DNA into RNA using the four ribonucleoside triphosphates as substrates. In Oleidesulfovibrio alaskensis (strain ATCC BAA-1058 / DSM 17464 / G20) (Desulfovibrio alaskensis), this protein is DNA-directed RNA polymerase subunit beta'.